Consider the following 394-residue polypeptide: MLEFEQGFNHLATLKVIGVGGGGNNAVNRMIDHGMNNVEFIAINTDGQALNLSKAESKIQIGEKLTRGLGAGANPEIGKKAAEESREQIEDAIQGADMVFVTAGMGGGTGTGAAPVVAKIAKEMGALTVGVVTRPFGFEGRKRQTQAAAGVESMKAAVDTLIVIPNDRLLDIVDKSTPMMEAFKEADNVLRQGVQGISDLIAVSGEVNLDFADVKTIMSNQGSALMGIGVSSGENRAVEAAKKAISSPLLETSIVGAQGVLMNITGGESLSLFEAQEAADIVQDAADEDVNMIFGTVINPELQDEIVVTVIATGFEDKPSSQGRKATSTGFGSSVNSSSNHQSGASAKEDSFSAHTSHSQSSESVNERSHTTKDDDIPSFIRNREERRSRRTRR.

GTP-binding positions include 21–25 (GGGNN), 108–110 (GTG), Glu139, Arg143, and Asp187. Residues 317–394 (DKPSSQGRKA…EERRSRRTRR (78 aa)) are disordered. Low complexity-rich tracts occupy residues 328–346 (STGF…SGAS) and 353–364 (SAHTSHSQSSES). Residues 365–388 (VNERSHTTKDDDIPSFIRNREERR) show a composition bias toward basic and acidic residues.

It belongs to the FtsZ family. Homodimer. Polymerizes to form a dynamic ring structure in a strictly GTP-dependent manner. Interacts directly with several other division proteins.

Its subcellular location is the cytoplasm. Essential cell division protein that forms a contractile ring structure (Z ring) at the future cell division site. The regulation of the ring assembly controls the timing and the location of cell division. One of the functions of the FtsZ ring is to recruit other cell division proteins to the septum to produce a new cell wall between the dividing cells. Binds GTP and shows GTPase activity. The polypeptide is Cell division protein FtsZ (Staphylococcus epidermidis (strain ATCC 12228 / FDA PCI 1200)).